The sequence spans 719 residues: Fatty acid oxidation complex subunit alpha (719 aa).

Positions 1 to 190 are enoyl-CoA hydratase/isomerase; the sequence is MVYQGNRITV…KLGLVDATVA (190 aa). Position 298 (Asp-298) interacts with substrate. The segment at 313 to 719 is 3-hydroxyacyl-CoA dehydrogenase; that stretch reads HEINEAAVLG…AAGETFYATA (407 aa). NAD(+) contacts are provided by residues Met-326, Asp-345, 402 to 404, Lys-409, and Ser-431; that span reads VVE. His-452 serves as the catalytic For 3-hydroxyacyl-CoA dehydrogenase activity. Asn-455 is a binding site for NAD(+). Asn-502 contacts substrate.

This sequence in the N-terminal section; belongs to the enoyl-CoA hydratase/isomerase family. It in the C-terminal section; belongs to the 3-hydroxyacyl-CoA dehydrogenase family. Heterotetramer of two alpha chains (FadB) and two beta chains (FadA).

The enzyme catalyses a (3S)-3-hydroxyacyl-CoA + NAD(+) = a 3-oxoacyl-CoA + NADH + H(+). It carries out the reaction a (3S)-3-hydroxyacyl-CoA = a (2E)-enoyl-CoA + H2O. It catalyses the reaction a 4-saturated-(3S)-3-hydroxyacyl-CoA = a (3E)-enoyl-CoA + H2O. The catalysed reaction is (3S)-3-hydroxybutanoyl-CoA = (3R)-3-hydroxybutanoyl-CoA. The enzyme catalyses a (3Z)-enoyl-CoA = a 4-saturated (2E)-enoyl-CoA. It carries out the reaction a (3E)-enoyl-CoA = a 4-saturated (2E)-enoyl-CoA. Its pathway is lipid metabolism; fatty acid beta-oxidation. In terms of biological role, involved in the aerobic and anaerobic degradation of long-chain fatty acids via beta-oxidation cycle. Catalyzes the formation of 3-oxoacyl-CoA from enoyl-CoA via L-3-hydroxyacyl-CoA. It can also use D-3-hydroxyacyl-CoA and cis-3-enoyl-CoA as substrate. This Psychrobacter arcticus (strain DSM 17307 / VKM B-2377 / 273-4) protein is Fatty acid oxidation complex subunit alpha.